A 201-amino-acid polypeptide reads, in one-letter code: Recombination protein RecR (201 aa).

The C4-type zinc finger occupies 60–75 (CKRCGSYAETEICEIC). The region spanning 83 to 178 (HTFCVVEQPE…NVTRIAYGIT (96 aa)) is the Toprim domain.

Belongs to the RecR family.

In terms of biological role, may play a role in DNA repair. It seems to be involved in an RecBC-independent recombinational process of DNA repair. It may act with RecF and RecO. This is Recombination protein RecR from Leptospira interrogans serogroup Icterohaemorrhagiae serovar copenhageni (strain Fiocruz L1-130).